The sequence spans 191 residues: DNA-directed RNA polymerase subunit Rpo3 (191 aa).

It belongs to the archaeal Rpo3/eukaryotic RPB3 RNA polymerase subunit family. In terms of assembly, part of the RNA polymerase complex. Interacts with Rpo12. Forms an Rpo3-Rpo10-Rpo11-Rpo12 complex upon coexpression.

Its subcellular location is the cytoplasm. The enzyme catalyses RNA(n) + a ribonucleoside 5'-triphosphate = RNA(n+1) + diphosphate. In terms of biological role, DNA-dependent RNA polymerase (RNAP) catalyzes the transcription of DNA into RNA using the four ribonucleoside triphosphates as substrates. The protein is DNA-directed RNA polymerase subunit Rpo3 of Methanocaldococcus jannaschii (strain ATCC 43067 / DSM 2661 / JAL-1 / JCM 10045 / NBRC 100440) (Methanococcus jannaschii).